The sequence spans 365 residues: 3-dehydroquinate synthase (365 aa).

Residues 69-74, 103-107, 127-128, K140, and K149 each bind NAD(+); these read DGEAHK, GVIGD, and TT. Residues E182, H245, and H262 each contribute to the Zn(2+) site.

This sequence belongs to the sugar phosphate cyclases superfamily. Dehydroquinate synthase family. Requires NAD(+) as cofactor. It depends on Co(2+) as a cofactor. Zn(2+) serves as cofactor.

It localises to the cytoplasm. The enzyme catalyses 7-phospho-2-dehydro-3-deoxy-D-arabino-heptonate = 3-dehydroquinate + phosphate. It functions in the pathway metabolic intermediate biosynthesis; chorismate biosynthesis; chorismate from D-erythrose 4-phosphate and phosphoenolpyruvate: step 2/7. In terms of biological role, catalyzes the conversion of 3-deoxy-D-arabino-heptulosonate 7-phosphate (DAHP) to dehydroquinate (DHQ). The chain is 3-dehydroquinate synthase from Pseudomonas putida (strain ATCC 47054 / DSM 6125 / CFBP 8728 / NCIMB 11950 / KT2440).